We begin with the raw amino-acid sequence, 887 residues long: Ubiquitin carboxyl-terminal hydrolase 4 (887 aa).

The Rhodanese domain occupies 202–328 (KEDSLLLIDV…WIKNGGEIDK (127 aa)). 2 disordered regions span residues 358 to 465 (AFPD…PKPP) and 484 to 505 (QKQN…TLIR). Over residues 387–402 (TPPNGSSTLGRINSPV) the composition is skewed to polar residues. Positions 525–885 (VGLENMGNSC…SAYVLFYHRI (361 aa)) constitute a USP domain. Cysteine 534 serves as the catalytic Nucleophile. The Proton acceptor role is filled by histidine 842.

This sequence belongs to the peptidase C19 family.

The protein resides in the cytoplasm. The protein localises to the late endosome membrane. It catalyses the reaction Thiol-dependent hydrolysis of ester, thioester, amide, peptide and isopeptide bonds formed by the C-terminal Gly of ubiquitin (a 76-residue protein attached to proteins as an intracellular targeting signal).. RFU1 is an inhibitor of deubiquitination activity. Functionally, ubiquitin thioesterase that acts at the late endosome/prevacuolar compartment to recover ubiquitin from ubiquitinated membrane proteins en route to the vacuole. Also removes ubiquitin from soluble proteins targeted to proteasomes. Is essential to maintain a normal level of free ubiquitin. Required for promoting coordination of DNA replication and avoids DNA overreplication. The chain is Ubiquitin carboxyl-terminal hydrolase 4 (DOA4) from Candida glabrata (strain ATCC 2001 / BCRC 20586 / JCM 3761 / NBRC 0622 / NRRL Y-65 / CBS 138) (Yeast).